A 338-amino-acid polypeptide reads, in one-letter code: Mitochondrial E3 ubiquitin protein ligase 1 (338 aa).

Topologically, residues 1 to 3 (MEF) are cytoplasmic. Residues 4 to 24 (LHESVALGVDLLILGLCAREY) traverse the membrane as a helical segment. Residues 25 to 227 (VHYKRTAKVL…LIKRFEDAKT (203 aa)) lie on the Mitochondrial intermembrane side of the membrane. Residues 228–248 (TTILKLVVCSTISAILVAFIA) traverse the membrane as a helical segment. The Cytoplasmic portion of the chain corresponds to 249 to 338 (KKLYRKRKQE…IVSKAAAFIA (90 aa)). An RING-type zinc finger spans residues 290-326 (CVVCSTNPKEIILLPCGHVCLCEDCAQKISVTCPVCR).

Interacts with Marf. Post-translationally, auto-ubiquitinated.

It localises to the mitochondrion outer membrane. The catalysed reaction is S-ubiquitinyl-[E2 ubiquitin-conjugating enzyme]-L-cysteine + [acceptor protein]-L-lysine = [E2 ubiquitin-conjugating enzyme]-L-cysteine + N(6)-ubiquitinyl-[acceptor protein]-L-lysine.. Its function is as follows. Exhibits weak E3 ubiquitin-protein ligase activity. E3 ubiquitin ligases accept ubiquitin from an E2 ubiquitin-conjugating enzyme in the form of a thioester and then directly transfer the ubiquitin to targeted substrates. Plays a role in the control of mitochondrial morphology by promoting mitochondrial fission. Negatively regulates the mitochondrial fusion protein marf by promoting its ubiquitination, acting in a pathway that is parallel to the park/pink1 regulatory pathway. The polypeptide is Mitochondrial E3 ubiquitin protein ligase 1 (Drosophila melanogaster (Fruit fly)).